A 94-amino-acid chain; its full sequence is Pyrimidine/purine nucleoside phosphorylase (94 aa).

Belongs to the nucleoside phosphorylase PpnP family.

The enzyme catalyses a purine D-ribonucleoside + phosphate = a purine nucleobase + alpha-D-ribose 1-phosphate. It catalyses the reaction adenosine + phosphate = alpha-D-ribose 1-phosphate + adenine. The catalysed reaction is cytidine + phosphate = cytosine + alpha-D-ribose 1-phosphate. It carries out the reaction guanosine + phosphate = alpha-D-ribose 1-phosphate + guanine. The enzyme catalyses inosine + phosphate = alpha-D-ribose 1-phosphate + hypoxanthine. It catalyses the reaction thymidine + phosphate = 2-deoxy-alpha-D-ribose 1-phosphate + thymine. The catalysed reaction is uridine + phosphate = alpha-D-ribose 1-phosphate + uracil. It carries out the reaction xanthosine + phosphate = alpha-D-ribose 1-phosphate + xanthine. In terms of biological role, catalyzes the phosphorolysis of diverse nucleosides, yielding D-ribose 1-phosphate and the respective free bases. Can use uridine, adenosine, guanosine, cytidine, thymidine, inosine and xanthosine as substrates. Also catalyzes the reverse reactions. The chain is Pyrimidine/purine nucleoside phosphorylase from Vibrio parahaemolyticus serotype O3:K6 (strain RIMD 2210633).